The chain runs to 494 residues: Ribose import ATP-binding protein RbsA (494 aa).

2 ABC transporter domains span residues 3–240 (IEMK…VGRS) and 250–494 (SQIS…TGGE). 35 to 42 (GENGAGKS) is an ATP binding site.

The protein belongs to the ABC transporter superfamily. Ribose importer (TC 3.A.1.2.1) family. As to quaternary structure, the complex is composed of an ATP-binding protein (RbsA), two transmembrane proteins (RbsC) and a solute-binding protein (RbsB).

The protein resides in the cell membrane. The enzyme catalyses D-ribose(out) + ATP + H2O = D-ribose(in) + ADP + phosphate + H(+). Its function is as follows. Part of the ABC transporter complex RbsABC involved in ribose import. Responsible for energy coupling to the transport system. This Bacillus cereus (strain ZK / E33L) protein is Ribose import ATP-binding protein RbsA.